The primary structure comprises 1038 residues: Pentatricopeptide repeat-containing protein At5g27270 (1038 aa).

Positions 23–38 (SRNSRISIKSSSSSSK) are enriched in low complexity. Residues 23-69 (SRNSRISIKSSSSSSKVRPDPWSLSDGNPEKPKPRYERPKHPLSDDD) are disordered. The span at 50 to 69 (NPEKPKPRYERPKHPLSDDD) shows a compositional bias: basic and acidic residues. PPR repeat units lie at residues 187–221 (SVVV…GCEP), 222–256 (DAVA…RILL), 257–291 (STSV…GVPP), 292–326 (NEFT…GFVP), 327–361 (EEVT…GIVP), 362–396 (SNYT…KIPA), 397–431 (DEVI…NLLA), 432–466 (DEKT…DIPL), 467–501 (SRFA…GLPD), 502–535 (ASSC…QVHF), 536–570 (DIEL…ARVK), 601–631 (DVMA…MFKT), 634–668 (GSSA…GLRM), 669–699 (EEET…AGES), 703–737 (GKSV…GCDP), 738–772 (GAVT…NIEL), 773–807 (DTVG…GVPC), 808–842 (SIQT…GLYL), 843–877 (DEKI…GIKP), 878–912 (GTPS…GRCT), 913–947 (DLST…GIPL), 948–982 (SHSH…GISP), and 983–1017 (DSAC…SVED).

Belongs to the PPR family. P subfamily.

This Arabidopsis thaliana (Mouse-ear cress) protein is Pentatricopeptide repeat-containing protein At5g27270 (EMB976).